The chain runs to 296 residues: MTITASLVKELRQRTSAGMMDCKQALTETNGDMEAAIDLMRTSGAAKATRKAGRITIEGLVKVNISADKKTVTILEVNSETDFVTKGDVFIGFVDMLGTLALKTTPINIEEFLSQTLDNGDSLEKAREDIIAKVGENIAIRRVQTITTNNGVIGTYKHGERIAVVTVLEGGDEVLAKDIAMHIAASKPECISEAELSTDLLEREKAIFVKQAKESEKPDNFIEKIIVGRMKKFVNEITLYGQYFVKDPDTTIGKLVQSNNAQVKSFVRFEVGEGIEKKEENFADEVMAQIQGANTD.

Residues 81–84 are involved in Mg(2+) ion dislocation from EF-Tu; the sequence is TDFV.

Belongs to the EF-Ts family.

The protein localises to the cytoplasm. Functionally, associates with the EF-Tu.GDP complex and induces the exchange of GDP to GTP. It remains bound to the aminoacyl-tRNA.EF-Tu.GTP complex up to the GTP hydrolysis stage on the ribosome. The chain is Elongation factor Ts from Ruthia magnifica subsp. Calyptogena magnifica.